The primary structure comprises 295 residues: Bifunctional protein FolD (295 aa).

NADP(+)-binding positions include 166 to 168 (GRS), serine 191, and isoleucine 232.

This sequence belongs to the tetrahydrofolate dehydrogenase/cyclohydrolase family. Homodimer.

It carries out the reaction (6R)-5,10-methylene-5,6,7,8-tetrahydrofolate + NADP(+) = (6R)-5,10-methenyltetrahydrofolate + NADPH. It catalyses the reaction (6R)-5,10-methenyltetrahydrofolate + H2O = (6R)-10-formyltetrahydrofolate + H(+). It participates in one-carbon metabolism; tetrahydrofolate interconversion. Its function is as follows. Catalyzes the oxidation of 5,10-methylenetetrahydrofolate to 5,10-methenyltetrahydrofolate and then the hydrolysis of 5,10-methenyltetrahydrofolate to 10-formyltetrahydrofolate. The chain is Bifunctional protein FolD from Wolbachia sp. subsp. Brugia malayi (strain TRS).